We begin with the raw amino-acid sequence, 269 residues long: Mitochondrial S-adenosylmethionine carrier protein (269 aa).

Solcar repeat units follow at residues 4 to 77, 85 to 167, and 176 to 264; these read REFC…AKQL, LSPI…LKDL, and VDSW…VRTL. Helical transmembrane passes span 5–25, 49–69, 84–104, 141–161, 181–201, and 237–257; these read EFCASLLAGGTAGMCVDLILF, IYAGVPSTAVGSFPNAAAFFV, YLSPIIHMAAASLGEVVACLI, RGYKSTVLREIPFSLVQFPLW, SAVCGAFAGGFAAALTTPLDV, and FAGVIPRMTAISLGGFIFLGA.

The protein belongs to the mitochondrial carrier (TC 2.A.29) family.

The protein localises to the mitochondrion inner membrane. The catalysed reaction is S-adenosyl-L-homocysteine(out) + S-adenosyl-L-methionine(in) = S-adenosyl-L-homocysteine(in) + S-adenosyl-L-methionine(out). Mitochondrial S-adenosyl-L-methionine/S-adenosyl-L-homocysteine antiporter. Mediates the exchange of cytosolic S-adenosyl-L-methionine, the predominant methyl-group donor for macromolecule methylation processes, for mitochondrial S-adenosylhomocysteine(SAH), a by-product of methylation reactions. The sequence is that of Mitochondrial S-adenosylmethionine carrier protein (slc25a26) from Xenopus tropicalis (Western clawed frog).